The chain runs to 419 residues: Gamma-glutamyl phosphate reductase (419 aa).

This sequence belongs to the gamma-glutamyl phosphate reductase family.

It localises to the cytoplasm. The enzyme catalyses L-glutamate 5-semialdehyde + phosphate + NADP(+) = L-glutamyl 5-phosphate + NADPH + H(+). The protein operates within amino-acid biosynthesis; L-proline biosynthesis; L-glutamate 5-semialdehyde from L-glutamate: step 2/2. Functionally, catalyzes the NADPH-dependent reduction of L-glutamate 5-phosphate into L-glutamate 5-semialdehyde and phosphate. The product spontaneously undergoes cyclization to form 1-pyrroline-5-carboxylate. The polypeptide is Gamma-glutamyl phosphate reductase (Bordetella avium (strain 197N)).